The following is a 285-amino-acid chain: HTH-type transcriptional regulator MurR (285 aa).

The region spanning 1–77 (MLYLTKIRNA…MALIGEYSAS (77 aa)) is the HTH rpiR-type domain. The segment at residues 37-56 (SRKMAKQLGISQSSIVKFAQ) is a DNA-binding region (H-T-H motif). The 141-residue stretch at 128–268 (IIEVISKAPF…FVGLVQLNDV (141 aa)) folds into the SIS domain.

Homotetramer.

It participates in amino-sugar metabolism; N-acetylmuramate degradation [regulation]. Represses the expression of the murPQ operon involved in the uptake and degradation of N-acetylmuramic acid (MurNAc). Binds to two adjacent inverted repeats within the operator region. MurNAc 6-phosphate, the substrate of MurQ, is the specific inducer that weakens binding of MurR to the operator. This is HTH-type transcriptional regulator MurR from Shigella sonnei (strain Ss046).